Reading from the N-terminus, the 872-residue chain is Alanine--tRNA ligase (872 aa).

4 residues coordinate Zn(2+): His-566, His-570, Cys-668, and His-672.

Belongs to the class-II aminoacyl-tRNA synthetase family. It depends on Zn(2+) as a cofactor.

It is found in the cytoplasm. The catalysed reaction is tRNA(Ala) + L-alanine + ATP = L-alanyl-tRNA(Ala) + AMP + diphosphate. Catalyzes the attachment of alanine to tRNA(Ala) in a two-step reaction: alanine is first activated by ATP to form Ala-AMP and then transferred to the acceptor end of tRNA(Ala). Also edits incorrectly charged Ser-tRNA(Ala) and Gly-tRNA(Ala) via its editing domain. This is Alanine--tRNA ligase from Lactococcus lactis subsp. cremoris (strain SK11).